The chain runs to 428 residues: Kynureninase (428 aa).

Pyridoxal 5'-phosphate is bound by residues Thr104, Thr105, Phe132 to Asp135, Asp213, His216, and Tyr238. Lys239 bears the N6-(pyridoxal phosphate)lysine mark. Pyridoxal 5'-phosphate-binding residues include Trp267 and Thr295.

The protein belongs to the kynureninase family. As to quaternary structure, homodimer. Pyridoxal 5'-phosphate is required as a cofactor.

The enzyme catalyses L-kynurenine + H2O = anthranilate + L-alanine + H(+). It carries out the reaction 3-hydroxy-L-kynurenine + H2O = 3-hydroxyanthranilate + L-alanine + H(+). It functions in the pathway amino-acid degradation; L-kynurenine degradation; L-alanine and anthranilate from L-kynurenine: step 1/1. It participates in cofactor biosynthesis; NAD(+) biosynthesis; quinolinate from L-kynurenine: step 2/3. Functionally, catalyzes the cleavage of L-kynurenine (L-Kyn) and L-3-hydroxykynurenine (L-3OHKyn) into anthranilic acid (AA) and 3-hydroxyanthranilic acid (3-OHAA), respectively. This is Kynureninase from Geobacillus thermodenitrificans (strain NG80-2).